Reading from the N-terminus, the 222-residue chain is C-reactive protein (222 aa).

The N-terminal stretch at 1–19 (MEKLSLCLLVIISLSNAFA) is a signal peptide. Q20 is subject to Pyrrolidone carboxylic acid. The 199-residue stretch at 24–222 (IGKAFVFPKE…EVYVKPQLWP (199 aa)) folds into the Pentraxin (PTX) domain. An intrachain disulfide couples C55 to C113. Residues N78, E154, Q155, D156, and Q166 each coordinate Ca(2+).

This sequence belongs to the pentraxin family. In terms of assembly, homopentamer. Pentraxin (or pentaxin) have a discoid arrangement of 5 non-covalently bound subunits. Interacts with FCN1; may regulate monocyte activation by FCN1. It depends on Ca(2+) as a cofactor. As to expression, found in plasma.

Its subcellular location is the secreted. In terms of biological role, displays several functions associated with host defense: it promotes agglutination, bacterial capsular swelling, phagocytosis and complement fixation through its calcium-dependent binding to phosphorylcholine. Can interact with DNA and histones and may scavenge nuclear material released from damaged circulating cells. In Sus scrofa (Pig), this protein is C-reactive protein (CRP).